The following is a 92-amino-acid chain: Signal recognition particle 19 kDa protein (92 aa).

This sequence belongs to the SRP19 family. As to quaternary structure, part of the signal recognition particle protein translocation system, which is composed of SRP and FtsY. Archaeal SRP consists of a 7S RNA molecule of 300 nucleotides and two protein subunits: SRP54 and SRP19.

It is found in the cytoplasm. Involved in targeting and insertion of nascent membrane proteins into the cytoplasmic membrane. Binds directly to 7S RNA and mediates binding of the 54 kDa subunit of the SRP. This chain is Signal recognition particle 19 kDa protein, found in Halobacterium salinarum (strain ATCC 29341 / DSM 671 / R1).